We begin with the raw amino-acid sequence, 112 residues long: UPF0102 protein Pmob_0702 (112 aa).

The protein belongs to the UPF0102 family.

This chain is UPF0102 protein Pmob_0702, found in Petrotoga mobilis (strain DSM 10674 / SJ95).